A 522-amino-acid polypeptide reads, in one-letter code: Putative aminopeptidase W07G4.4 (522 aa).

Zn(2+) contacts are provided by Lys-271 and Asp-276. The active site involves Lys-283. 3 residues coordinate Zn(2+): Asp-294, Asp-354, and Glu-356. The active site involves Arg-358.

This sequence belongs to the peptidase M17 family. Zn(2+) serves as cofactor.

This chain is Putative aminopeptidase W07G4.4 (lap-2), found in Caenorhabditis elegans.